A 213-amino-acid polypeptide reads, in one-letter code: V-type proton ATPase subunit c'' (213 aa).

The Vacuolar segment spans residues 1 to 14; the sequence is MNKESKDDDMSLGK. A helical transmembrane segment spans residues 15 to 35; sequence FSFSHFLYYLVLIVVIVYGLY. At 36 to 61 the chain is on the cytoplasmic side; sequence KLFTGHGSDINFGKFLLRTSPYMWAN. The helical transmembrane segment at 62-82 threads the bilayer; sequence LGIALCVGLSVVGAAWGIFIT. At 83 to 100 the chain is on the vacuolar side; the sequence is GSSMIGAGVRAPRITTKN. A helical membrane pass occupies residues 101–121; that stretch reads LISIIFCEVVAIYGLIIAIVF. The Cytoplasmic segment spans residues 122–144; it reads SSKLTVATAENMYSKSNLYTGYS. A helical membrane pass occupies residues 145-165; that stretch reads LFWAGITVGASNLICGIAVGI. At 166 to 183 the chain is on the vacuolar side; it reads TGATAAISDAADSALFVK. The helical transmembrane segment at 184–204 threads the bilayer; the sequence is ILVIEIFGSILGLLGLIVGLL. Residues 205 to 213 are Cytoplasmic-facing; the sequence is MAGKASEFQ.

The protein belongs to the V-ATPase proteolipid subunit family. In terms of assembly, V-ATPase is a heteromultimeric enzyme composed of a peripheral catalytic V1 complex (components A to H) attached to an integral membrane V0 proton pore complex (components: a, c, c', c'', d, e, f and VOA1). The decameric c-ring forms the proton-conducting pore, and is composed of eight proteolipid subunits c, one subunit c' and one subunit c''.

Its subcellular location is the vacuole membrane. Proton-conducting pore forming subunit of the V0 complex of vacuolar(H+)-ATPase (V-ATPase), a multisubunit enzyme composed of a peripheral complex (V1) that hydrolyzes ATP and a membrane integral complex (V0) that translocates protons. V-ATPase is responsible for acidifying and maintaining the pH of intracellular compartments. In Saccharomyces cerevisiae (strain ATCC 204508 / S288c) (Baker's yeast), this protein is V-type proton ATPase subunit c'' (VMA16).